The chain runs to 181 residues: Adenylate kinase (181 aa).

10–15 is a binding site for ATP; that stretch reads GAGKGT. Positions 30–59 are NMP; it reads STGELFRSNIENGTKLGLEAKRYLDAGDLV. AMP contacts are provided by residues T31, R36, 57–59, 85–88, and Q92; these read DLV and GFPR. An LID region spans residues 126–132; sequence ARGRADD. R127 serves as a coordination point for ATP. Positions 129 and 140 each coordinate AMP. G166 is an ATP binding site.

Belongs to the adenylate kinase family. Monomer.

It localises to the cytoplasm. The enzyme catalyses AMP + ATP = 2 ADP. It participates in purine metabolism; AMP biosynthesis via salvage pathway; AMP from ADP: step 1/1. Catalyzes the reversible transfer of the terminal phosphate group between ATP and AMP. Plays an important role in cellular energy homeostasis and in adenine nucleotide metabolism. The protein is Adenylate kinase of Mycolicibacterium paratuberculosis (strain ATCC BAA-968 / K-10) (Mycobacterium paratuberculosis).